We begin with the raw amino-acid sequence, 250 residues long: NADH-quinone oxidoreductase subunit C (250 aa).

2 disordered regions span residues 1–33 (MSDDSSDVKPGPKGPEQPAVEQSPENVPAPTGE) and 228–250 (LGGVPVEYKGGTVPPPDQRRSYN).

Belongs to the complex I 30 kDa subunit family. NDH-1 is composed of 14 different subunits. Subunits NuoB, C, D, E, F, and G constitute the peripheral sector of the complex.

The protein localises to the cell membrane. The enzyme catalyses a quinone + NADH + 5 H(+)(in) = a quinol + NAD(+) + 4 H(+)(out). Functionally, NDH-1 shuttles electrons from NADH, via FMN and iron-sulfur (Fe-S) centers, to quinones in the respiratory chain. The immediate electron acceptor for the enzyme in this species is believed to be a menaquinone. Couples the redox reaction to proton translocation (for every two electrons transferred, four hydrogen ions are translocated across the cytoplasmic membrane), and thus conserves the redox energy in a proton gradient. This chain is NADH-quinone oxidoreductase subunit C, found in Nocardioides sp. (strain ATCC BAA-499 / JS614).